Consider the following 212-residue polypeptide: Small ribosomal subunit protein eS1 (212 aa).

Belongs to the eukaryotic ribosomal protein eS1 family.

The protein is Small ribosomal subunit protein eS1 of Ignicoccus hospitalis (strain KIN4/I / DSM 18386 / JCM 14125).